Reading from the N-terminus, the 403-residue chain is MDRLTVRELSPEENKVLVRVDFNVPIKDGKILDDIRIRSAMPTINYLLQKRAAVILMSHLGRPKGTGFEEKYSLQPVVEVLEGYLGHHVPLAPDCIGEVARQAVAQLSPGRVLLLENLRFHRGEEHPEEDPTFAAELSSYGDFYVNDAFGTSHRKHASVYHVPQAFPGRSAAGLLMEKELEFLGQHLLHSPKRPFTAILGGAKVSSKIGVIEALLSQVNNLLLAGGMGFTFLKALGKSVGNSLVEESGIELARRVLKLAEQRNVRIVLPIDVKVAKACEPGVSWSETLIDQGIPADLEGLDIGTKTIQEFCKIIDASATVFWNGPVGVYEVPPFDQGSMAIANCLARHSSATTVVGGGDAAAVVALAGCTSQVSHVSTGGGASLEFLENGFLPGTEVLSPAQD.

Substrate-binding positions include 21-23 (DFN), R36, 59-62 (HLGR), R119, and R154. ATP-binding positions include K207, G299, E330, and 357 to 360 (GGDA).

The protein belongs to the phosphoglycerate kinase family. Monomer.

It localises to the cytoplasm. The catalysed reaction is (2R)-3-phosphoglycerate + ATP = (2R)-3-phospho-glyceroyl phosphate + ADP. It participates in carbohydrate degradation; glycolysis; pyruvate from D-glyceraldehyde 3-phosphate: step 2/5. The polypeptide is Phosphoglycerate kinase (Chlamydia caviae (strain ATCC VR-813 / DSM 19441 / 03DC25 / GPIC) (Chlamydophila caviae)).